Consider the following 407-residue polypeptide: Argininosuccinate synthase (407 aa).

ATP-binding positions include 16–24 and Ala-44; that span reads AYSGGLDTS. 2 residues coordinate L-citrulline: Tyr-96 and Ser-101. Position 126 (Gly-126) interacts with ATP. 3 residues coordinate L-aspartate: Thr-128, Asn-132, and Asp-133. L-citrulline is bound at residue Asn-132. 5 residues coordinate L-citrulline: Arg-136, Ser-185, Ser-194, Glu-270, and Tyr-282.

Belongs to the argininosuccinate synthase family. Type 1 subfamily. As to quaternary structure, homotetramer.

It localises to the cytoplasm. It carries out the reaction L-citrulline + L-aspartate + ATP = 2-(N(omega)-L-arginino)succinate + AMP + diphosphate + H(+). It functions in the pathway amino-acid biosynthesis; L-arginine biosynthesis; L-arginine from L-ornithine and carbamoyl phosphate: step 2/3. This is Argininosuccinate synthase from Shewanella sp. (strain ANA-3).